We begin with the raw amino-acid sequence, 343 residues long: Cytoplasmic tRNA 2-thiolation protein 1 (343 aa).

It belongs to the TtcA family. CTU1/NCS6/ATPBD3 subfamily.

Its subcellular location is the cytoplasm. It functions in the pathway tRNA modification; 5-methoxycarbonylmethyl-2-thiouridine-tRNA biosynthesis. Its function is as follows. Plays a central role in 2-thiolation of mcm(5)S(2)U at tRNA wobble positions of tRNA(Lys), tRNA(Glu) and tRNA(Gln). Directly binds tRNAs and probably acts by catalyzing adenylation of tRNAs, an intermediate required for 2-thiolation. It is unclear whether it acts as a sulfurtransferase that transfers sulfur from thiocarboxylated URM1 onto the uridine of tRNAs at wobble position. This chain is Cytoplasmic tRNA 2-thiolation protein 1, found in Drosophila virilis (Fruit fly).